A 288-amino-acid polypeptide reads, in one-letter code: Disulfide-bond oxidoreductase YghU (288 aa).

Residues N26, 52 to 54 (TPN), Q87, I101, 117 to 118 (ES), Q151, and R178 contribute to the glutathione site. One can recognise a GST N-terminal domain in the interval 46-133 (QLYSLGTPNG…YLAEKFGYFL (88 aa)). The GST C-terminal domain maps to 139–265 (KRTETMNWLF…RIVNRTNGPL (127 aa)). The segment at 260–288 (RTNGPLNEQLHERHDASDFETNTEDKRQG) is disordered. Residues 268–288 (QLHERHDASDFETNTEDKRQG) show a composition bias toward basic and acidic residues.

This sequence belongs to the GST superfamily. Nu-class GSH transferase family. Homodimer.

Its function is as follows. Exhibits a robust glutathione (GSH)-dependent disulfide-bond reductase activity toward the model substrate, 2-hydroxyethyl disulfide; the actual physiological substrates are not known. Also displays a modest GSH-dependent peroxidase activity toward several organic hydroperoxides, such as cumene hydroperoxide and linoleic acid 13(S)-hydroperoxide, but does not reduce H(2)O(2) or tert-butyl hydroperoxide at appreciable rates. Exhibits little or no GSH transferase activity with most typical electrophilic substrates, and has no detectable transferase activity toward 1-chloro-2,4-dinitrobenzene (CDNB) with glutathionylspermidine (GspSH) as the nucleophilic substrate. The chain is Disulfide-bond oxidoreductase YghU (yghU) from Escherichia coli (strain K12).